The primary structure comprises 492 residues: Solute carrier family 2, facilitated glucose transporter member 1 (492 aa).

M1 is subject to N-acetylmethionine. The Cytoplasmic portion of the chain corresponds to 1-11 (MEPTSKKLTGR). The helical transmembrane segment at 12–33 (LMLAVGGAVLGSLQFGYNTGVI) threads the bilayer. Residues 34–66 (NAPQKVIEEFYNQTWVQRYGEPIPPATLTTLWS) are Extracellular-facing. N-linked (GlcNAc...) asparagine glycosylation occurs at N45. The chain crosses the membrane as a helical span at residues 67-87 (LSVAIFSVGGMIGSFSVGLFV). Residues 88 to 90 (NRF) are Cytoplasmic-facing. A helical transmembrane segment spans residues 91 to 112 (GRRNSMLMMNLLAFVSAVLMGF). Over 113–120 (SKLGKSFE) the chain is Extracellular. The chain crosses the membrane as a helical span at residues 121 to 144 (MLILGRFIIGVYCGLTTGFVPMYV). The Cytoplasmic portion of the chain corresponds to 145-155 (GEVSPTELRGA). Residues 156 to 176 (LGTLHQLGIVVGILIAQVFGL) traverse the membrane as a helical segment. Position 161 (Q161) interacts with D-glucose. Residues 177–185 (DSIMGNQEL) lie on the Extracellular side of the membrane. The helical transmembrane segment at 186 to 206 (WPLLLSVIFIPALLQCILLPF) threads the bilayer. The Cytoplasmic segment spans residues 207–271 (CPESPRFLLI…LFRSAAYRQP (65 aa)). S226 is subject to Phosphoserine. A helical transmembrane segment spans residues 272-293 (ILIAVVLQLSQQLSGINAVFYY). D-glucose-binding positions include 282 to 283 (QQ) and N288. Over 294–306 (STSIFEKAGVQQP) the chain is Extracellular. Residues 307-328 (VYATIGSGIVNTAFTVVSLFVV) traverse the membrane as a helical segment. N317 lines the D-glucose pocket. Residues 329-334 (ERAGRR) lie on the Cytoplasmic side of the membrane. Residues 335–355 (TLHLIGLAGMAGCAVLMTIAL) form a helical membrane-spanning segment. Topologically, residues 356 to 365 (ALLERLPWMS) are extracellular. Residues 366 to 388 (YLSIVAIFGFVAFFEVGPGPIPW) form a helical membrane-spanning segment. Positions 380 and 388 each coordinate D-glucose. At 389 to 401 (FIVAELFSQGPRP) the chain is on the cytoplasmic side. The helical transmembrane segment at 402–422 (AAIAVAGFSNWTSNFIVGMCF) threads the bilayer. Residues 423–429 (QYVEQLC) lie on the Extracellular side of the membrane. A helical transmembrane segment spans residues 430–450 (GPYVFIIFTVLLVLFFIFTYF). Topologically, residues 451-492 (KVPETKGRTFDEIASGFRQGGASQSDKTPEELFHPLGADSQV) are cytoplasmic. Residue S465 is modified to Phosphoserine. The tract at residues 468–492 (RQGGASQSDKTPEELFHPLGADSQV) is disordered. Position 478 is a phosphothreonine (T478). Residue S490 is modified to Phosphoserine.

This sequence belongs to the major facilitator superfamily. Sugar transporter (TC 2.A.1.1) family. Glucose transporter subfamily. Found in a complex with ADD2, DMTN and SLC2A1. Interacts (via C-terminus cytoplasmic region) with DMTN. Interacts with SNX27; the interaction is required when endocytosed to prevent degradation in lysosomes and promote recycling to the plasma membrane. Interacts with GIPC (via PDZ domain). Interacts with STOM. Interacts with SGTA (via Gln-rich region). Interacts with BSG. Interacts with SMIM43; the interaction may promote SLC2A1-mediated glucose transport to meet the energy needs of mesendoderm differentiation. Post-translationally, phosphorylation at Ser-226 by PKC promotes glucose uptake by increasing cell membrane localization. Detected in brain capillary (at protein level). Detected in brain capillary.

It localises to the cell membrane. The protein localises to the photoreceptor inner segment. It catalyses the reaction D-glucose(out) = D-glucose(in). Its activity is regulated as follows. The uptake of glucose is inhibited by cytochalasin B. Glucose uptake is increased in response to phorbol ester 12-O-tetradecanoylphorbol-13-acetate (TPA) treatment: TPA-induced glucose uptake requires phosphorylation at Ser-226. Functionally, facilitative glucose transporter, which is responsible for constitutive or basal glucose uptake. Has a very broad substrate specificity; can transport a wide range of aldoses including both pentoses and hexoses. Most important energy carrier of the brain: present at the blood-brain barrier and assures the energy-independent, facilitative transport of glucose into the brain. In association with BSG and NXNL1, promotes retinal cone survival by increasing glucose uptake into photoreceptors. Required for mesendoderm differentiation. This Bos taurus (Bovine) protein is Solute carrier family 2, facilitated glucose transporter member 1.